The sequence spans 26 residues: Toxin TdII-1 (26 aa).

It belongs to the long (4 C-C) scorpion toxin superfamily. Sodium channel inhibitor family. Beta subfamily. Expressed by the venom gland.

It is found in the secreted. In terms of biological role, beta toxins bind voltage-independently at site-4 of sodium channels (Nav) and shift the voltage of activation toward more negative potentials thereby affecting sodium channel activation and promoting spontaneous and repetitive firing. This toxin is active against mammals and crustaceans. The polypeptide is Toxin TdII-1 (Tityus discrepans (Venezuelan scorpion)).